We begin with the raw amino-acid sequence, 1073 residues long: Carbamoyl phosphate synthase large chain (1073 aa).

Residues 1 to 403 (MPKRTDIKSI…SLQKALRGLE (403 aa)) are carboxyphosphate synthetic domain. The ATP site is built by R129, R169, G175, G176, E208, L210, E215, G241, V242, H243, Q285, and E299. Positions 133-328 (DKAMKDIGLE…IAKIAAKLAI (196 aa)) constitute an ATP-grasp 1 domain. Mg(2+) is bound by residues Q285, E299, and N301. Mn(2+) contacts are provided by Q285, E299, and N301. The oligomerization domain stretch occupies residues 404-553 (VGACGLDPKV…YSTYEEECEA (150 aa)). A carbamoyl phosphate synthetic domain region spans residues 554–935 (NPSTRDKIMI…AFAKAQMGAS (382 aa)). An ATP-grasp 2 domain is found at 678-869 (QQMVQRLSLL…LAMIAARVMA (192 aa)). ATP-binding residues include R714, H753, L755, E760, G785, V786, H787, S788, Q828, and E840. Mg(2+) contacts are provided by Q828, E840, and N842. Q828, E840, and N842 together coordinate Mn(2+). The MGS-like domain maps to 936-1073 (EVLPTGGTAF…LQDLHAGLKA (138 aa)). The tract at residues 936–1073 (EVLPTGGTAF…LQDLHAGLKA (138 aa)) is allosteric domain.

Belongs to the CarB family. In terms of assembly, composed of two chains; the small (or glutamine) chain promotes the hydrolysis of glutamine to ammonia, which is used by the large (or ammonia) chain to synthesize carbamoyl phosphate. Tetramer of heterodimers (alpha,beta)4. Requires Mg(2+) as cofactor. Mn(2+) is required as a cofactor.

The catalysed reaction is hydrogencarbonate + L-glutamine + 2 ATP + H2O = carbamoyl phosphate + L-glutamate + 2 ADP + phosphate + 2 H(+). It carries out the reaction hydrogencarbonate + NH4(+) + 2 ATP = carbamoyl phosphate + 2 ADP + phosphate + 2 H(+). It participates in amino-acid biosynthesis; L-arginine biosynthesis; carbamoyl phosphate from bicarbonate: step 1/1. It functions in the pathway pyrimidine metabolism; UMP biosynthesis via de novo pathway; (S)-dihydroorotate from bicarbonate: step 1/3. Functionally, large subunit of the glutamine-dependent carbamoyl phosphate synthetase (CPSase). CPSase catalyzes the formation of carbamoyl phosphate from the ammonia moiety of glutamine, carbonate, and phosphate donated by ATP, constituting the first step of 2 biosynthetic pathways, one leading to arginine and/or urea and the other to pyrimidine nucleotides. The large subunit (synthetase) binds the substrates ammonia (free or transferred from glutamine from the small subunit), hydrogencarbonate and ATP and carries out an ATP-coupled ligase reaction, activating hydrogencarbonate by forming carboxy phosphate which reacts with ammonia to form carbamoyl phosphate. The protein is Carbamoyl phosphate synthase large chain of Pseudomonas putida (strain ATCC 47054 / DSM 6125 / CFBP 8728 / NCIMB 11950 / KT2440).